We begin with the raw amino-acid sequence, 140 residues long: Actin-depolymerizing factor 10 (140 aa).

S6 is modified (phosphoserine). The 133-residue stretch at G7–N139 folds into the ADF-H domain.

Belongs to the actin-binding proteins ADF family.

It localises to the cytoplasm. It is found in the cytoskeleton. Actin-depolymerizing protein. Severs actin filaments (F-actin) and binds to actin monomers. This Arabidopsis thaliana (Mouse-ear cress) protein is Actin-depolymerizing factor 10 (ADF10).